A 594-amino-acid polypeptide reads, in one-letter code: Proteasome-associated ATPase (594 aa).

Residues 20-98 (DDLAAQVTYL…KEEIDRLAQP (79 aa)) adopt a coiled-coil conformation. 282–287 (GCGKTL) serves as a coordination point for ATP. The interval 593 to 594 (YL) is docks into pockets in the proteasome alpha-ring.

It belongs to the AAA ATPase family. Homohexamer. Assembles into a hexameric ring structure that caps the 20S proteasome core. Strongly interacts with the prokaryotic ubiquitin-like protein Pup through a hydrophobic interface; the interacting region of ARC lies in its N-terminal coiled-coil domain. There is one Pup binding site per ARC hexamer ring. Upon ATP-binding, the C-terminus of ARC interacts with the alpha-rings of the proteasome core, possibly by binding to the intersubunit pockets.

It participates in protein degradation; proteasomal Pup-dependent pathway. In terms of biological role, ATPase which is responsible for recognizing, binding, unfolding and translocation of pupylated proteins into the bacterial 20S proteasome core particle. May be essential for opening the gate of the 20S proteasome via an interaction with its C-terminus, thereby allowing substrate entry and access to the site of proteolysis. Thus, the C-termini of the proteasomal ATPase may function like a 'key in a lock' to induce gate opening and therefore regulate proteolysis. This Catenulispora acidiphila (strain DSM 44928 / JCM 14897 / NBRC 102108 / NRRL B-24433 / ID139908) protein is Proteasome-associated ATPase.